The sequence spans 213 residues: Orotidine 5'-phosphate decarboxylase (213 aa).

Residues Asp6, Lys25, Asp52–Thr61, Ser109, Pro158–Gly168, Gly181, and Arg182 each bind substrate. The Proton donor role is filled by Lys54.

Belongs to the OMP decarboxylase family. Type 1 subfamily. Homodimer.

It catalyses the reaction orotidine 5'-phosphate + H(+) = UMP + CO2. It participates in pyrimidine metabolism; UMP biosynthesis via de novo pathway; UMP from orotate: step 2/2. Its function is as follows. Catalyzes the decarboxylation of orotidine 5'-monophosphate (OMP) to uridine 5'-monophosphate (UMP). The polypeptide is Orotidine 5'-phosphate decarboxylase (Sulfurisphaera tokodaii (strain DSM 16993 / JCM 10545 / NBRC 100140 / 7) (Sulfolobus tokodaii)).